A 1758-amino-acid chain; its full sequence is MKQRAALGPVLRLAILALLAVSYVQSQATCRDCSNRGCFCVGEKGSMGAPGPQGPPGTQGIRGFPGPEGLAGPKGLKGAQGPPGPVGIKGDRGAVGVPGFPGNDGGNGRPGEPGPPGAPGWDGCNGTDGAPGIPGRPGPPGMPGFPGPPGMDGLKGEPAIGYAGAPGEKGDGGMPGMPGLPGPSGRDGYPGEKGDRGDTGNAGPRGPPGEAGSPGNPGIGSIGPKGDPGDLGSVGPPGPPGPREFTGSGSIVGPRGNPGEKGDKGEPGEGGQRGYPGNGGLSGQPGLPGMKGEKGLSGPAGPRGKEGRPGNAGPPGFKGDRGLDGLGGIPGLPGQKGEAGYPGRDGPKGNSGPPGPPGGGTFNDGAPGPPGLPGRPGNPGPPGTDGYPGAPGPAGPIGNTGGPGLPGYPGNEGLPGPKGDKGDGGIPGAPGVSGPSGIPGLPGPKGEPGYRGTPGQSIPGLPGKDGKPGLDGAPGRKGENGLPGVRGPPGDSLNGLPGAPGQRGAPGPNGYDGRDGVNGLPGAPGTKGDRGGTCSACAPGTKGEKGLPGYSGQPGPQGDRGLPGMPGPVGDAGDDGLPGPAGRPGSPGPPGQDGFPGLPGQKGEPTQLTLRPGPPGYPGLKGENGFPGQPGVDGLPGPSGPVGPPGAPGYPGEKGDAGLPGLSGKPGQDGLPGLPGNKGEAGYGQPGQPGFPGAKGDGGLPGLPGTPGLQGMPGEPAPENQVNPAPPGQPGLPGLPGTKGEGGYPGRPGEVGQPGFPGLPGMKGDSGLPGPPGLPGHPGVPGDKGFGGVPGLPGIPGPKGDVGNPGLPGLNGQKGEPGVGVPGQPGSPGFPGLKGDAGLPGLPGTPGLEGQRGFPGAPGLKGGDGLPGLSGQPGYPGEKGDAGLPGVPGREGSPGFPGQDGLPGVPGMKGEDGLPGLPGVTGLKGDLGAPGQSGAPGLPGAPGYPGMKGNAGIPGVPGFKGDGGLPGLPGLNGPKGEPGVPGMPGTPGMKGNGGLPGLPGRDGLSGVPGMKGDRGFNGLPGEKGEAGPAARDGQKGDAGLPGQPGLRGPQGPSGLPGVPGFKGETGLPGYGQPGQPGEKGLPGIPGKAGRQGAPGSPGQDGLPGFPGMKGESGYPGQDGLPGRDGLPGVPGQKGDLGQSGQPGLSGAPGLDGQPGVPGIRGDKGQGGLPGIPGDRGMDGYPGQKGENGYPGQPGLPGLGGEKGFAGTPGFPGLKGSPGYPGQDGLPGIPGLKGDSGFPGQPGQEGLPGLSGEKGMGGLPGMPGQPGQSIAGPVGPPGAPGLQGKDGFPGLPGQKGESGLSGLPGAPGLKGESGMPGFPGAKGDLGANGIPGKRGEDGLPGVPGRDGQPGIPGLKGEVGGAGLPGQPGFPGIPGLKGEGGLPGFPGAKGEAGFPGTPGVPGYAGEKGDGGLPGLPGRDGLPGADGPVGPPGPSGPQNLVEPGEKGLPGLPGAPGLRGEKGMPGLDGPPGNDGPPGLPGQRGNDGYPGAPGLSGEKGMGGLPGFPGLDGQPGGPGAPGLPGAPGAAGPAYRDGFVLVKHSQTTEVPRCPEGQTKLWDGYSLLYIEGNEKSHNQDLGHAGSCLQRFSTMPFLFCDFNNVCNYASRNEKSYWLSTSEAIPMMPVNEREIEPYISRCAVCEAPANTIAVHSQTIQIPNCPAGWSSLWIGYSFAMHTGAGAEGGGQSPSSPGSCLEDFRATPFIECNGARGSCHYFANKFSFWLTTIDNDSEFKVPESQTLKSGNLRTRVSRCQVCVKSTDGRH.

The first 26 residues, 1-26 (MKQRAALGPVLRLAILALLAVSYVQS), serve as a signal peptide directing secretion. The interval 27 to 42 (QATCRDCSNRGCFCVG) is 7S domain. The segment at 42-1527 (GEKGSMGAPG…PGAPGAAGPA (1486 aa)) is triple-helical region. Residues 47-62 (MGAPGPQGPPGTQGIR) are compositionally biased toward low complexity. Disordered regions lie at residues 47–943 (MGAP…GAPG), 955–1304 (GVPG…GLPG), 1316–1339 (GFPG…DGLP), and 1367–1525 (GFPG…GAAG). Residues 102–111 (GNDGGNGRPG) show a composition bias toward gly residues. Residues 134–149 (PGRPGPPGMPGFPGPP) are compositionally biased toward pro residues. Residues 189–198 (YPGEKGDRGD) are compositionally biased toward basic and acidic residues. Over residues 224 to 234 (PKGDPGDLGSV) the composition is skewed to low complexity. An O-linked (Xyl...) (glycosaminoglycan) serine glycan is attached at serine 248. The span at 258-267 (PGEKGDKGEP) shows a compositional bias: basic and acidic residues. Residues 268-283 (GEGGQRGYPGNGGLSG) show a composition bias toward gly residues. Over residues 367-382 (PGPPGLPGRPGNPGPP) the composition is skewed to pro residues. The segment covering 398-407 (GNTGGPGLPG) has biased composition (gly residues). 2 stretches are compositionally biased toward low complexity: residues 408 to 417 (YPGNEGLPGP) and 429 to 439 (APGVSGPSGIP). Over residues 464-479 (KDGKPGLDGAPGRKGE) the composition is skewed to basic and acidic residues. 2 stretches are compositionally biased toward low complexity: residues 495–509 (GLPG…PGPN) and 568–584 (PVGD…AGRP). A compositionally biased stretch (pro residues) spans 638–648 (PSGPVGPPGAP). Composition is skewed to gly residues over residues 693–702 (GAKGDGGLPG), 737–746 (GTKGEGGYPG), and 782–791 (GDKGFGGVPG). Low complexity predominate over residues 839–858 (LPGLPGTPGLEGQRGFPGAP). A compositionally biased stretch (gly residues) spans 859–868 (GLKGGDGLPG). A compositionally biased stretch (low complexity) spans 929–938 (APGQSGAPGL). The span at 958–967 (GFKGDGGLPG) shows a compositional bias: gly residues. The span at 968 to 980 (LPGLNGPKGEPGV) shows a compositional bias: low complexity. Residues 988–997 (GMKGNGGLPG) show a composition bias toward gly residues. Positions 1040–1056 (LPGQPGLRGPQGPSGLP) are enriched in low complexity. A compositionally biased stretch (gly residues) spans 1194 to 1203 (GLPGLGGEKG). Over residues 1237–1250 (FPGQPGQEGLPGLS) the composition is skewed to low complexity. The segment covering 1251–1260 (GEKGMGGLPG) has biased composition (gly residues). A compositionally biased stretch (gly residues) spans 1373–1382 (GLKGEGGLPG). 2 stretches are compositionally biased toward low complexity: residues 1413–1425 (LPGR…ADGP) and 1433–1454 (GPQN…APGL). Composition is skewed to gly residues over residues 1492 to 1501 (GEKGMGGLPG) and 1507 to 1516 (GQPGGPGAPG). In terms of domain architecture, Collagen IV NC1 spans 1531–1754 (GFVLVKHSQT…SRCQVCVKST (224 aa)). Intrachain disulfides connect cysteine 1546–cysteine 1635, cysteine 1579–cysteine 1632, cysteine 1591–cysteine 1597, cysteine 1654–cysteine 1750, cysteine 1688–cysteine 1747, and cysteine 1700–cysteine 1707.

Belongs to the type IV collagen family. Trimers of two alpha 1(IV) and one alpha 2(IV) chain. Type IV collagen forms a mesh-like network linked through intermolecular interactions between 7S domains and between NC1 domains. Post-translationally, prolines at the third position of the tripeptide repeating unit (G-X-Y) are hydroxylated in some or all of the chains. In terms of processing, type IV collagens contain numerous cysteine residues which are involved in inter- and intramolecular disulfide bonding. 12 of these, located in the NC1 domain, are conserved in all known type IV collagens. The trimeric structure of the NC1 domains is stabilized by covalent bonds between Lys and Met residues. As to expression, localizes to the basement membrane between distal tip cells and the germline. Localizes to the intestinal basement membrane.

The protein resides in the secreted. The protein localises to the extracellular space. It localises to the extracellular matrix. It is found in the basement membrane. Its function is as follows. Collagen type IV is specific for basement membranes. Together with fbl-1 and downstream of metalloprotease mig-17, recruits nidogen nid-1 to the gonad basement membrane thereby probably inducing basement membrane remodeling required for the directional migration of distal tip cells. Required to restrict presynaptic growth at the neuromuscular junctions in late larval stage and in adult motor neurons. Vital for embryonic development. The polypeptide is Collagen alpha-2(IV) chain (Caenorhabditis elegans).